An 84-amino-acid chain; its full sequence is Large ribosomal subunit protein bL27 (84 aa).

The interval 1–29 (MAHKKGGGSTKNGRDSNPKYLGIKASGGS) is disordered.

The protein belongs to the bacterial ribosomal protein bL27 family.

This is Large ribosomal subunit protein bL27 from Chlorobium phaeobacteroides (strain BS1).